The sequence spans 50 residues: Sperm protamine P1 (50 aa).

Intrachain disulfides connect cysteine 7–cysteine 15 and cysteine 39–cysteine 47.

Belongs to the protamine P1 family. Cross-linked by interchain disulfide bonds around the DNA-helix. As to expression, testis.

Its subcellular location is the nucleus. It localises to the chromosome. Protamines substitute for histones in the chromatin of sperm during the haploid phase of spermatogenesis. They compact sperm DNA into a highly condensed, stable and inactive complex. This chain is Sperm protamine P1 (PRM1), found in Sus scrofa (Pig).